We begin with the raw amino-acid sequence, 244 residues long: DNA repair protein RecO (244 aa).

Belongs to the RecO family.

Involved in DNA repair and RecF pathway recombination. This chain is DNA repair protein RecO, found in Caldicellulosiruptor saccharolyticus (strain ATCC 43494 / DSM 8903 / Tp8T 6331).